Here is a 264-residue protein sequence, read N- to C-terminus: Methionine aminopeptidase (264 aa).

Residue histidine 79 participates in substrate binding. The a divalent metal cation site is built by aspartate 97, aspartate 108, and histidine 171. Histidine 178 contributes to the substrate binding site. A divalent metal cation-binding residues include glutamate 204 and glutamate 235.

Belongs to the peptidase M24A family. Methionine aminopeptidase type 1 subfamily. As to quaternary structure, monomer. Requires Co(2+) as cofactor. It depends on Zn(2+) as a cofactor. Mn(2+) serves as cofactor. The cofactor is Fe(2+).

It carries out the reaction Release of N-terminal amino acids, preferentially methionine, from peptides and arylamides.. In terms of biological role, removes the N-terminal methionine from nascent proteins. The N-terminal methionine is often cleaved when the second residue in the primary sequence is small and uncharged (Met-Ala-, Cys, Gly, Pro, Ser, Thr, or Val). Requires deformylation of the N(alpha)-formylated initiator methionine before it can be hydrolyzed. The chain is Methionine aminopeptidase from Escherichia coli O157:H7.